The following is a 598-amino-acid chain: DNA polymerase alpha subunit B (598 aa).

Residues 112 to 140 (SYTTPSKGSQKRAISTPETPLTKRSVSTR) are compositionally biased toward polar residues. The interval 112–167 (SYTTPSKGSQKRAISTPETPLTKRSVSTRSPHQLLSPSSFSPSATPSQKYNSRSNR) is disordered. S126 is subject to Phosphoserine. Residues T127 and T130 each carry the phosphothreonine modification. Phosphoserine occurs at positions 141, 147, 152, and 154. The span at 141–158 (SPHQLLSPSSFSPSATPS) shows a compositional bias: low complexity.

The protein belongs to the DNA polymerase alpha subunit B family. In terms of assembly, component of the alpha DNA polymerase complex (also known as the alpha DNA polymerase-primase complex) consisting of four subunits: the catalytic subunit POLA1, the regulatory subunit POLA2, and primase complex subunits PRIM1 and PRIM2 respectively. Within the complex, POLA1 directly interacts with PRIM2/p58. Post-translationally, phosphorylated in a cell cycle-dependent manner, in G2/M phase.

Its subcellular location is the nucleus. Its function is as follows. Accessory subunit of the DNA polymerase alpha complex (also known as the alpha DNA polymerase-primase complex) which plays an essential role in the initiation of DNA synthesis. During the S phase of the cell cycle, the DNA polymerase alpha complex (composed of a catalytic subunit POLA1, an accessory subunit POLA2 and two primase subunits, the catalytic subunit PRIM1 and the regulatory subunit PRIM2) is recruited to DNA at the replicative forks via direct interactions with MCM10 and WDHD1. The primase subunit of the polymerase alpha complex initiates DNA synthesis by oligomerising short RNA primers on both leading and lagging strands. These primers are initially extended by the polymerase alpha catalytic subunit and subsequently transferred to polymerase delta and polymerase epsilon for processive synthesis on the lagging and leading strand, respectively. The chain is DNA polymerase alpha subunit B (POLA2) from Homo sapiens (Human).